The sequence spans 349 residues: Farnesyl pyrophosphate synthase vrtD (349 aa).

Positions 53, 56, and 92 each coordinate isopentenyl diphosphate. Mg(2+) is bound by residues aspartate 99 and aspartate 103. Position 108 (arginine 108) interacts with dimethylallyl diphosphate. An isopentenyl diphosphate-binding site is contributed by arginine 109. Dimethylallyl diphosphate contacts are provided by lysine 196, threonine 197, glutamine 236, lysine 253, and lysine 262.

Belongs to the FPP/GGPP synthase family. The cofactor is Mg(2+).

It catalyses the reaction isopentenyl diphosphate + dimethylallyl diphosphate = (2E)-geranyl diphosphate + diphosphate. It carries out the reaction isopentenyl diphosphate + (2E)-geranyl diphosphate = (2E,6E)-farnesyl diphosphate + diphosphate. The protein operates within secondary metabolite biosynthesis; terpenoid biosynthesis. Functionally, farnesyl pyrophosphate synthase; part of the gene cluster that mediates the biosynthesis of viridicatumtoxin, a tetracycline-like fungal meroterpenoid with a unique, fused spirobicyclic ring system. The first step of the pathway is the production of the malonamoyl-CoA starter unit for the polyketide synthase vrtA. The aldolase vrtJ may be involved in the synthesis of the malonamate substrate for malonamoyl-CoA synthetase vrtB. The polyketide synthase vrtA then may utilize the malonamoyl-CoA starter unit, followed by sequential condensation of eight malonyl-CoA units to form the polyketide backbone. The cyclization of the last ring could be mediated by the lactamase-like protein vrtG. The proposed post-PKS tailoring steps are a hydroxylation at C5 catalyzed the cytochrome P450 monooxygenase vrtE, a hydroxylation at C12a catalyzed by VrtH and/or VrtI, and an O-methylation by the O-methyltransferase vrtF. VrtC is then proposed to catalyze the transfer of a geranyl group synthesized by vrtD to the aromatic C ring of the tetracyclic polyketide intermediate of viridicatumtoxin to yield previridicatumtoxin. Finally, the cytochrome P450 monooxygenase vrtK catalyzes the spirocyclization of the geranyl moiety of previridicatumtoxin to afford viridicatumtoxin. This chain is Farnesyl pyrophosphate synthase vrtD, found in Penicillium aethiopicum.